We begin with the raw amino-acid sequence, 304 residues long: 4-diphosphocytidyl-2-C-methyl-D-erythritol kinase (304 aa).

Residue Lys-20 is part of the active site. An ATP-binding site is contributed by 106–116 (PVASGIGGGSG). The active site involves Asp-148.

It belongs to the GHMP kinase family. IspE subfamily.

The enzyme catalyses 4-CDP-2-C-methyl-D-erythritol + ATP = 4-CDP-2-C-methyl-D-erythritol 2-phosphate + ADP + H(+). The protein operates within isoprenoid biosynthesis; isopentenyl diphosphate biosynthesis via DXP pathway; isopentenyl diphosphate from 1-deoxy-D-xylulose 5-phosphate: step 3/6. Functionally, catalyzes the phosphorylation of the position 2 hydroxy group of 4-diphosphocytidyl-2C-methyl-D-erythritol. This Bartonella bacilliformis (strain ATCC 35685 / KC583 / Herrer 020/F12,63) protein is 4-diphosphocytidyl-2-C-methyl-D-erythritol kinase.